A 615-amino-acid chain; its full sequence is Sterol 3-beta-glucosyltransferase UGT80B1 (615 aa).

The segment at 1 to 54 (MASNVFDHPLQELEGEDNGVKSEKASLLETSGSVDTTPEDSGHRSSDGHRGLDH) is disordered. The span at 40-54 (DSGHRSSDGHRGLDH) shows a compositional bias: basic and acidic residues.

The protein belongs to the glycosyltransferase 28 family. In terms of tissue distribution, expressed in developing seeds, seedlings, leaves and around the apical tip of cotyledons. In embryo, expressed in the seed coat and cotyledons.

The enzyme catalyses a sterol + UDP-alpha-D-glucose = a sterol 3-beta-D-glucoside + UDP + H(+). In terms of biological role, involved in the biosynthesis of sterol glucosides. Catalyzes the synthesis of steryl glycosides (SGs) and acyl steryl glycosides (ASGs) which are the most abundant sterol derivatives in higher plants. Can act on several sterols like sitosterol, campesterol and stigmasterol. Is required for embryonic development, seed suberin accumulation, cutin formation and flavanoid accumulation in the seed coat. Both UGT80A2 and UGT80B1 are required for the normal production of SGs and ASGs in seeds. The polypeptide is Sterol 3-beta-glucosyltransferase UGT80B1 (Arabidopsis thaliana (Mouse-ear cress)).